The primary structure comprises 450 residues: L-galactonate dehydratase (450 aa).

Residue Lys221 is part of the active site. 3 residues coordinate Mg(2+): Asp251, Glu277, and Glu306. The active site involves His356.

Belongs to the mandelate racemase/muconate lactonizing enzyme family. Mg(2+) serves as cofactor.

It carries out the reaction L-galactonate = 2-dehydro-3-deoxy-L-galactonate + H2O. It participates in carbohydrate acid metabolism. Functionally, mediates the conversion of L-galactonate to 2-dehydro-3-deoxy-L-galactonate, the second step in D-galacturonate catabolic process. This Hypocrea jecorina (Trichoderma reesei) protein is L-galactonate dehydratase (lgd1).